A 666-amino-acid polypeptide reads, in one-letter code: ATP-dependent RNA helicase DDX51 (666 aa).

Ala2 is subject to N-acetylalanine. A disordered region spans residues 9–152 (YPGPDAAAAA…AAPDGPALEE (144 aa)). Residues 10–28 (PGPDAAAAAGPEGAEAGAH) show a composition bias toward low complexity. Positions 33–48 (ALLERLQSRARERQQQ) are enriched in basic and acidic residues. Residues 49–58 (REPAQTEAAA) show a composition bias toward low complexity. The segment covering 65–75 (RRRRRPRRRRR) has biased composition (basic residues). Ser83 and Ser103 each carry phosphoserine. Acidic residues predominate over residues 97–108 (EDAGAESNEEAP). Positions 221-229 (YFPVQAAVI) match the Q motif motif. In terms of domain architecture, Helicase ATP-binding spans 243 to 452 (GRGGYRPSDL…QLGLHQPRLF (210 aa)). 256 to 263 (APTGSGKT) lines the ATP pocket. Positions 371-374 (DEAD) match the DEAD box motif. The Helicase C-terminal domain maps to 494 to 640 (VVLHLVLEMG…RHELSSKLLQ (147 aa)).

This sequence belongs to the DEAD box helicase family. DDX51/DBP6 subfamily.

It is found in the nucleus. It localises to the nucleolus. It carries out the reaction ATP + H2O = ADP + phosphate + H(+). Functionally, ATP-binding RNA helicase involved in the biogenesis of 60S ribosomal subunits. The sequence is that of ATP-dependent RNA helicase DDX51 (DDX51) from Homo sapiens (Human).